The primary structure comprises 131 residues: Small ribosomal subunit protein uS8 (131 aa).

It belongs to the universal ribosomal protein uS8 family. As to quaternary structure, part of the 30S ribosomal subunit. Contacts proteins S5 and S12.

One of the primary rRNA binding proteins, it binds directly to 16S rRNA central domain where it helps coordinate assembly of the platform of the 30S subunit. This is Small ribosomal subunit protein uS8 from Paraburkholderia xenovorans (strain LB400).